We begin with the raw amino-acid sequence, 226 residues long: MSPFIKRGHGFMVLSFENLIDAVIVSRINRFVVKCMVNNEEVYAHLHDPGRLNEIIYPGNKIKLRKTDGKKYNYSVTFGHDGFNYTLNDARFHSMIASQFLRLGFKKEYKYMDSRIDFLLDEYLIEVKSCTLVNSKKAMFPDAVTRRGTHHLNVLLNSIQDGYRPYIMFLIFNERAECFTPNKCRDPEFSGTFYRAVKNGVSSKFLVFYIRENSIYFDKEISMCVD.

The protein belongs to the SfsA family.

The chain is Sugar fermentation stimulation protein homolog from Picrophilus torridus (strain ATCC 700027 / DSM 9790 / JCM 10055 / NBRC 100828 / KAW 2/3).